Here is a 530-residue protein sequence, read N- to C-terminus: Glutamate--cysteine ligase (530 aa).

It belongs to the glutamate--cysteine ligase type 1 family. Type 1 subfamily.

It catalyses the reaction L-cysteine + L-glutamate + ATP = gamma-L-glutamyl-L-cysteine + ADP + phosphate + H(+). The protein operates within sulfur metabolism; glutathione biosynthesis; glutathione from L-cysteine and L-glutamate: step 1/2. This Azotobacter vinelandii (strain DJ / ATCC BAA-1303) protein is Glutamate--cysteine ligase.